Here is a 209-residue protein sequence, read N- to C-terminus: Thymidylate kinase (209 aa).

10–17 (GLEGAGKS) contributes to the ATP binding site.

It belongs to the thymidylate kinase family.

It carries out the reaction dTMP + ATP = dTDP + ADP. Functionally, phosphorylation of dTMP to form dTDP in both de novo and salvage pathways of dTTP synthesis. This Photobacterium profundum (strain SS9) protein is Thymidylate kinase.